A 459-amino-acid polypeptide reads, in one-letter code: DNA polymerase subunit gamma-2 (459 aa).

Heterotrimer composed of a catalytic subunit and a homodimer of accessory subunits (POLG:POLG2).

It localises to the mitochondrion. The protein localises to the mitochondrion matrix. Its subcellular location is the mitochondrion nucleoid. Functionally, accessory subunit of DNA polymerase gamma solely responsible for replication of mitochondrial DNA (mtDNA). Acts as an allosteric regulator of the holoenzyme activities. Enhances the polymerase activity and the processivity of POLG by increasing its interactions with the DNA template. Suppresses POLG exonucleolytic proofreading especially toward homopolymeric templates bearing mismatched termini. Binds to single-stranded DNA. The protein is DNA polymerase subunit gamma-2 (Polg2) of Mus musculus (Mouse).